Reading from the N-terminus, the 207-residue chain is Large ribosomal subunit protein uL4 (207 aa).

Residues 45-78 are disordered; it reads RQGTHAVKNRSAVSGGGRKPWRQKGTGRARQGSI.

Belongs to the universal ribosomal protein uL4 family. As to quaternary structure, part of the 50S ribosomal subunit.

One of the primary rRNA binding proteins, this protein initially binds near the 5'-end of the 23S rRNA. It is important during the early stages of 50S assembly. It makes multiple contacts with different domains of the 23S rRNA in the assembled 50S subunit and ribosome. Its function is as follows. Forms part of the polypeptide exit tunnel. The protein is Large ribosomal subunit protein uL4 of Lacticaseibacillus paracasei (strain ATCC 334 / BCRC 17002 / CCUG 31169 / CIP 107868 / KCTC 3260 / NRRL B-441) (Lactobacillus paracasei).